The following is a 231-amino-acid chain: Large ribosomal subunit protein uL1 (231 aa).

It belongs to the universal ribosomal protein uL1 family. Part of the 50S ribosomal subunit.

Functionally, binds directly to 23S rRNA. The L1 stalk is quite mobile in the ribosome, and is involved in E site tRNA release. In terms of biological role, protein L1 is also a translational repressor protein, it controls the translation of the L11 operon by binding to its mRNA. The sequence is that of Large ribosomal subunit protein uL1 from Ralstonia nicotianae (strain ATCC BAA-1114 / GMI1000) (Ralstonia solanacearum).